A 475-amino-acid polypeptide reads, in one-letter code: ATP synthase subunit beta 1 (475 aa).

Residue 152-159 (GGAGVGKT) participates in ATP binding.

This sequence belongs to the ATPase alpha/beta chains family. As to quaternary structure, F-type ATPases have 2 components, CF(1) - the catalytic core - and CF(0) - the membrane proton channel. CF(1) has five subunits: alpha(3), beta(3), gamma(1), delta(1), epsilon(1). CF(0) has four main subunits: a(1), b(1), b'(1) and c(9-12).

The protein localises to the cell inner membrane. It catalyses the reaction ATP + H2O + 4 H(+)(in) = ADP + phosphate + 5 H(+)(out). In terms of biological role, produces ATP from ADP in the presence of a proton gradient across the membrane. The catalytic sites are hosted primarily by the beta subunits. The polypeptide is ATP synthase subunit beta 1 (Cereibacter sphaeroides (strain ATCC 17029 / ATH 2.4.9) (Rhodobacter sphaeroides)).